Reading from the N-terminus, the 205-residue chain is Small ribosomal subunit protein uS4 (205 aa).

The disordered stretch occupies residues 18 to 46 (NIWGRPKSPVNSRAYGPGQHGQRRKSKVS). Positions 94–155 (SRLDAVVYRA…RSRNMALVLE (62 aa)) constitute an S4 RNA-binding domain.

The protein belongs to the universal ribosomal protein uS4 family. Part of the 30S ribosomal subunit. Contacts protein S5. The interaction surface between S4 and S5 is involved in control of translational fidelity.

In terms of biological role, one of the primary rRNA binding proteins, it binds directly to 16S rRNA where it nucleates assembly of the body of the 30S subunit. With S5 and S12 plays an important role in translational accuracy. This is Small ribosomal subunit protein uS4 from Phenylobacterium zucineum (strain HLK1).